Consider the following 445-residue polypeptide: 2-oxoisovalerate dehydrogenase subunit alpha, mitochondrial (445 aa).

A mitochondrion-targeting transit peptide spans 1 to 45 (MAVAIAAARVWRPNRGLSQAALLLLWRPGARGLARSHPHRQQQQF). Thiamine diphosphate contacts are provided by tyrosine 158 and arginine 159. Serine 206 provides a ligand contact to K(+). Serine 207 serves as a coordination point for thiamine diphosphate. K(+) contacts are provided by proline 208, threonine 211, and glutamine 212. Glutamate 238 is a binding site for Mg(2+). Thiamine diphosphate is bound by residues glycine 239, alanine 240, and arginine 265. 2 residues coordinate Mg(2+): asparagine 267 and tyrosine 269. Histidine 336 is a thiamine diphosphate binding site. At serine 337 the chain carries Phosphoserine; by BCKDK. Threonine 338 is modified (phosphothreonine). Phosphoserine is present on residues serine 339 and serine 347. An N6-acetyllysine; alternate modification is found at lysine 356. Lysine 356 bears the N6-succinyllysine; alternate mark. At lysine 380 the chain carries N6-succinyllysine.

This sequence belongs to the BCKDHA family. In terms of assembly, heterotetramer of 2 alpha/BCKDHA and 2 beta chains/BCKDHB that forms the branched-chain alpha-keto acid decarboxylase (E1) component of the BCKD complex. The branched-chain alpha-ketoacid dehydrogenase is a large complex composed of three major building blocks E1, E2 and E3. It is organized around E2, a 24-meric cubic core composed of DBT, to which are associated 6 to 12 copies of E1, and approximately 6 copies of the dehydrogenase E3, a DLD dimer. Interacts with PPM1K. The cofactor is thiamine diphosphate. Requires Mg(2+) as cofactor. In terms of processing, phosphorylated at Ser-337 by BCKDK and dephosphorylated by protein phosphatase PPM1K.

Its subcellular location is the mitochondrion matrix. It catalyses the reaction N(6)-[(R)-lipoyl]-L-lysyl-[protein] + 3-methyl-2-oxobutanoate + H(+) = N(6)-[(R)-S(8)-2-methylpropanoyldihydrolipoyl]-L-lysyl-[protein] + CO2. Functionally, together with BCKDHB forms the heterotetrameric E1 subunit of the mitochondrial branched-chain alpha-ketoacid dehydrogenase (BCKD) complex. The BCKD complex catalyzes the multi-step oxidative decarboxylation of alpha-ketoacids derived from the branched-chain amino-acids valine, leucine and isoleucine producing CO2 and acyl-CoA which is subsequently utilized to produce energy. The E1 subunit catalyzes the first step with the decarboxylation of the alpha-ketoacid forming an enzyme-product intermediate. A reductive acylation mediated by the lipoylamide cofactor of E2 extracts the acyl group from the E1 active site for the next step of the reaction. This is 2-oxoisovalerate dehydrogenase subunit alpha, mitochondrial (BCKDHA) from Macaca fascicularis (Crab-eating macaque).